Reading from the N-terminus, the 675-residue chain is NADH-ubiquinone oxidoreductase 75 kDa subunit (675 aa).

The region spanning lysine 2–lysine 80 is the 2Fe-2S ferredoxin-type domain. [2Fe-2S] cluster contacts are provided by cysteine 36, cysteine 47, cysteine 50, and cysteine 64. The region spanning lysine 80–glycine 119 is the 4Fe-4S His(Cys)3-ligated-type domain. Residues histidine 96, cysteine 100, cysteine 103, cysteine 109, cysteine 148, cysteine 151, cysteine 154, and cysteine 198 each coordinate [4Fe-4S] cluster. Residues leucine 217–arginine 273 form the 4Fe-4S Mo/W bis-MGD-type domain.

Belongs to the complex I 75 kDa subunit family. As to quaternary structure, complex I is composed of about 30 different subunits. Requires [2Fe-2S] cluster as cofactor. [4Fe-4S] cluster is required as a cofactor.

The protein localises to the mitochondrion inner membrane. The enzyme catalyses a ubiquinone + NADH + 5 H(+)(in) = a ubiquinol + NAD(+) + 4 H(+)(out). Core subunit of the mitochondrial membrane respiratory chain NADH dehydrogenase (Complex I) that is believed to belong to the minimal assembly required for catalysis. Complex I functions in the transfer of electrons from NADH to the respiratory chain. The immediate electron acceptor for the enzyme is believed to be ubiquinone. This is the largest subunit of complex I and it is a component of the iron-sulfur (IP) fragment of the enzyme. It may form part of the active site crevice where NADH is oxidized. This Acanthamoeba castellanii (Amoeba) protein is NADH-ubiquinone oxidoreductase 75 kDa subunit (NAD11).